Here is a 420-residue protein sequence, read N- to C-terminus: ATP phosphoribosyltransferase regulatory subunit (420 aa).

It belongs to the class-II aminoacyl-tRNA synthetase family. HisZ subfamily. As to quaternary structure, heteromultimer composed of HisG and HisZ subunits.

Its subcellular location is the cytoplasm. It participates in amino-acid biosynthesis; L-histidine biosynthesis; L-histidine from 5-phospho-alpha-D-ribose 1-diphosphate: step 1/9. Its function is as follows. Required for the first step of histidine biosynthesis. May allow the feedback regulation of ATP phosphoribosyltransferase activity by histidine. The protein is ATP phosphoribosyltransferase regulatory subunit of Bacillus cereus (strain AH820).